The primary structure comprises 472 residues: Alanine--anticapsin ligase (472 aa).

Residue Glu-109 participates in Mg(2+) binding. 2 residues coordinate ATP: Lys-138 and Lys-178. In terms of domain architecture, ATP-grasp spans 142–355 (RAAFNRAGVK…MAQLLLDVLC (214 aa)). Residue Leu-182 coordinates Mg(2+). ATP contacts are provided by residues 184 to 185 (SS), 226 to 229 (EEFL), and Gln-268. Residues Glu-273 and 309–311 (HTE) each bind substrate. Residues Glu-311 and Glu-324 each coordinate Mg(2+). Position 328 to 331 (328 to 331 (RFAG)) interacts with substrate.

As to quaternary structure, monomer or homodimer. It depends on Mg(2+) as a cofactor.

The catalysed reaction is L-anticapsin + L-alanine + ATP = bacilysin + ADP + phosphate + H(+). The protein operates within antibiotic biosynthesis; bacilysin biosynthesis. Its function is as follows. Part of the bacABCDEFG operon responsible for the biosynthesis of bacilysin, an irreversible inactivator of the glutaminase domain of glucosamine synthetase. Catalyzes the formation of alpha-dipeptides from various L-amino acids in the presence of ATP. In vivo catalyzes the ligation of L-alanine and L-anticapsin (epoxycyclohexanonyl-Ala) to produce the final bacilysin antibiotic (L-Ala-L-4S-cyclohexenonyl-Ala dipeptide). This Bacillus amyloliquefaciens (Bacillus velezensis) protein is Alanine--anticapsin ligase.